The sequence spans 203 residues: Large ribosomal subunit protein bL25 (203 aa).

This sequence belongs to the bacterial ribosomal protein bL25 family. CTC subfamily. Part of the 50S ribosomal subunit; part of the 5S rRNA/L5/L18/L25 subcomplex. Contacts the 5S rRNA. Binds to the 5S rRNA independently of L5 and L18.

Functionally, this is one of the proteins that binds to the 5S RNA in the ribosome where it forms part of the central protuberance. The chain is Large ribosomal subunit protein bL25 from Rickettsia peacockii (strain Rustic).